We begin with the raw amino-acid sequence, 708 residues long: Chaperonin-containing T-complex member BBS12 (708 aa).

Belongs to the TCP-1 chaperonin family. BBS12 subfamily. Component of the chaperonin-containing T-complex (TRiC), a heterooligomeric complex of about 850 to 900 kDa that forms two stacked rings, 12 to 16 nm in diameter. Interacts with MKKS.

The protein localises to the cell projection. The protein resides in the cilium. Component of the chaperonin-containing T-complex (TRiC), a molecular chaperone complex that assists the folding of proteins upon ATP hydrolysis. As part of the TRiC complex may play a role in the assembly of BBSome, a complex involved in ciliogenesis regulating transports vesicles to the cilia. Involved in adipogenic differentiation. The protein is Chaperonin-containing T-complex member BBS12 (Bbs12) of Mus musculus (Mouse).